The chain runs to 591 residues: 2-succinyl-5-enolpyruvyl-6-hydroxy-3-cyclohexene-1-carboxylate synthase (591 aa).

This sequence belongs to the TPP enzyme family. MenD subfamily. As to quaternary structure, homodimer. Mg(2+) is required as a cofactor. Mn(2+) serves as cofactor. It depends on thiamine diphosphate as a cofactor.

The catalysed reaction is isochorismate + 2-oxoglutarate + H(+) = 5-enolpyruvoyl-6-hydroxy-2-succinyl-cyclohex-3-ene-1-carboxylate + CO2. It functions in the pathway quinol/quinone metabolism; 1,4-dihydroxy-2-naphthoate biosynthesis; 1,4-dihydroxy-2-naphthoate from chorismate: step 2/7. Its pathway is cofactor biosynthesis; phylloquinone biosynthesis. Functionally, catalyzes the thiamine diphosphate-dependent decarboxylation of 2-oxoglutarate and the subsequent addition of the resulting succinic semialdehyde-thiamine pyrophosphate anion to isochorismate to yield 2-succinyl-5-enolpyruvyl-6-hydroxy-3-cyclohexene-1-carboxylate (SEPHCHC). This Rippkaea orientalis (strain PCC 8801 / RF-1) (Cyanothece sp. (strain PCC 8801)) protein is 2-succinyl-5-enolpyruvyl-6-hydroxy-3-cyclohexene-1-carboxylate synthase.